The chain runs to 121 residues: Prefoldin subunit beta (121 aa).

It belongs to the prefoldin subunit beta family. Heterohexamer of two alpha and four beta subunits.

The protein localises to the cytoplasm. Its function is as follows. Molecular chaperone capable of stabilizing a range of proteins. Seems to fulfill an ATP-independent, HSP70-like function in archaeal de novo protein folding. The chain is Prefoldin subunit beta from Caldivirga maquilingensis (strain ATCC 700844 / DSM 13496 / JCM 10307 / IC-167).